A 520-amino-acid chain; its full sequence is TnpB-like protein L770 (520 aa).

A disordered region spans residues 23-44 (KTKKKVFVKKKPPDKKPLKKPV). Zn(2+)-binding residues include Cys474, Cys477, Cys491, and Cys494.

It in the central section; belongs to the transposase 2 family. This sequence in the C-terminal section; belongs to the transposase 35 family.

The sequence is that of TnpB-like protein L770 from Acanthamoeba polyphaga mimivirus (APMV).